The following is a 166-amino-acid chain: Regulatory protein RecX (166 aa).

This sequence belongs to the RecX family.

It localises to the cytoplasm. Its function is as follows. Modulates RecA activity. The chain is Regulatory protein RecX from Salmonella paratyphi C (strain RKS4594).